The sequence spans 315 residues: Acetyl-coenzyme A carboxylase carboxyl transferase subunit alpha (315 aa).

Residues L40–M293 form the CoA carboxyltransferase C-terminal domain.

Belongs to the AccA family. As to quaternary structure, acetyl-CoA carboxylase is a heterohexamer composed of biotin carboxyl carrier protein (AccB), biotin carboxylase (AccC) and two subunits each of ACCase subunit alpha (AccA) and ACCase subunit beta (AccD).

The protein resides in the cytoplasm. It catalyses the reaction N(6)-carboxybiotinyl-L-lysyl-[protein] + acetyl-CoA = N(6)-biotinyl-L-lysyl-[protein] + malonyl-CoA. It participates in lipid metabolism; malonyl-CoA biosynthesis; malonyl-CoA from acetyl-CoA: step 1/1. Its function is as follows. Component of the acetyl coenzyme A carboxylase (ACC) complex. First, biotin carboxylase catalyzes the carboxylation of biotin on its carrier protein (BCCP) and then the CO(2) group is transferred by the carboxyltransferase to acetyl-CoA to form malonyl-CoA. The sequence is that of Acetyl-coenzyme A carboxylase carboxyl transferase subunit alpha from Pseudomonas savastanoi pv. phaseolicola (strain 1448A / Race 6) (Pseudomonas syringae pv. phaseolicola (strain 1448A / Race 6)).